Reading from the N-terminus, the 358-residue chain is UDP-N-acetylglucosamine--N-acetylmuramyl-(pentapeptide) pyrophosphoryl-undecaprenol N-acetylglucosamine transferase (358 aa).

Residues Thr-11–Gly-13, Asn-124, Arg-164, Ser-195, and Gln-291 each bind UDP-N-acetyl-alpha-D-glucosamine.

The protein belongs to the glycosyltransferase 28 family. MurG subfamily.

The protein localises to the cell inner membrane. It carries out the reaction di-trans,octa-cis-undecaprenyl diphospho-N-acetyl-alpha-D-muramoyl-L-alanyl-D-glutamyl-meso-2,6-diaminopimeloyl-D-alanyl-D-alanine + UDP-N-acetyl-alpha-D-glucosamine = di-trans,octa-cis-undecaprenyl diphospho-[N-acetyl-alpha-D-glucosaminyl-(1-&gt;4)]-N-acetyl-alpha-D-muramoyl-L-alanyl-D-glutamyl-meso-2,6-diaminopimeloyl-D-alanyl-D-alanine + UDP + H(+). It participates in cell wall biogenesis; peptidoglycan biosynthesis. Its function is as follows. Cell wall formation. Catalyzes the transfer of a GlcNAc subunit on undecaprenyl-pyrophosphoryl-MurNAc-pentapeptide (lipid intermediate I) to form undecaprenyl-pyrophosphoryl-MurNAc-(pentapeptide)GlcNAc (lipid intermediate II). This chain is UDP-N-acetylglucosamine--N-acetylmuramyl-(pentapeptide) pyrophosphoryl-undecaprenol N-acetylglucosamine transferase, found in Leptospira borgpetersenii serovar Hardjo-bovis (strain JB197).